Reading from the N-terminus, the 521-residue chain is Bifunctional purine biosynthesis protein PurH (521 aa).

The region spanning 1–145 (MIKQALISVS…KNHRDVTVVV (145 aa)) is the MGS-like domain.

Belongs to the PurH family.

The catalysed reaction is (6R)-10-formyltetrahydrofolate + 5-amino-1-(5-phospho-beta-D-ribosyl)imidazole-4-carboxamide = 5-formamido-1-(5-phospho-D-ribosyl)imidazole-4-carboxamide + (6S)-5,6,7,8-tetrahydrofolate. It catalyses the reaction IMP + H2O = 5-formamido-1-(5-phospho-D-ribosyl)imidazole-4-carboxamide. The protein operates within purine metabolism; IMP biosynthesis via de novo pathway; 5-formamido-1-(5-phospho-D-ribosyl)imidazole-4-carboxamide from 5-amino-1-(5-phospho-D-ribosyl)imidazole-4-carboxamide (10-formyl THF route): step 1/1. It functions in the pathway purine metabolism; IMP biosynthesis via de novo pathway; IMP from 5-formamido-1-(5-phospho-D-ribosyl)imidazole-4-carboxamide: step 1/1. The chain is Bifunctional purine biosynthesis protein PurH from Burkholderia ambifaria (strain MC40-6).